The chain runs to 203 residues: MAEGQVLVLDGRGHLLGRLAAIVAKQVLLGRKVVVVRCEGINISGNFYRNKLNYLAFLRKRMNTNPSRGPYDFRAPSRIFWRTVRGMLPHKTKRGQAALDRLKVFDGIPPPYDKKKRMVVPAALKVVRLKPTRKFAYLGRLAHEVGWKYQAVTATLEEKRKEKAKIHYRKKKQLMRLRKQAEKNVEKKIDKYTEVLKTHGLLV.

Alanine 2 bears the N-acetylalanine mark. A Citrulline modification is found at arginine 59. Serine 77 is modified (phosphoserine). Residue arginine 140 is modified to Citrulline. Position 191 is an N6-acetyllysine (lysine 191).

It belongs to the universal ribosomal protein uL13 family. As to quaternary structure, component of the 60S ribosome. Component of the GAIT complex. Interacts with EIF4G1. Post-translationally, phosphorylation at Ser-77 upon interferon-gamma treatment in macrophages involves a DAPK1-DAPK3 kinase cascade and is causing release from the ribosome, association with the GAIT complex and subsequent involvement in transcript-selective translation inhibition. Citrullinated by PADI4.

The protein localises to the cytoplasm. Functionally, associated with ribosomes but is not required for canonical ribosome function and has extra-ribosomal functions. Component of the GAIT (gamma interferon-activated inhibitor of translation) complex which mediates interferon-gamma-induced transcript-selective translation inhibition in inflammation processes. Upon interferon-gamma activation and subsequent phosphorylation dissociates from the ribosome and assembles into the GAIT complex which binds to stem loop-containing GAIT elements in the 3'-UTR of diverse inflammatory mRNAs (such as ceruplasmin) and suppresses their translation. In the GAIT complex interacts with m7G cap-bound eIF4G at or near the eIF3-binding site and blocks the recruitment of the 43S ribosomal complex. Involved in methylation of rRNA. The sequence is that of Large ribosomal subunit protein uL13 (RPL13A) from Canis lupus familiaris (Dog).